A 238-amino-acid chain; its full sequence is Ankyrin repeat domain-containing protein 49 (238 aa).

The disordered stretch occupies residues 38–57 (TGTQSLWVGNSDEDEEQEEK). At serine 48 the chain carries Phosphoserine. A compositionally biased stretch (acidic residues) spans 48–57 (SDEDEEQEEK). ANK repeat units lie at residues 72 to 105 (DPSK…TRDE), 106 to 135 (DEYT…DVHA), 139 to 168 (DGWT…DINA), and 172 to 205 (GLLT…ELKN).

As to expression, expressed in spermatogonia, spermatocytes and round spermatids.

It localises to the nucleus. May have a role in spermatogenesis where it promotes autophagy in response to serum starvation, via the NF-kappaB pathway. This chain is Ankyrin repeat domain-containing protein 49 (Ankrd49), found in Mus musculus (Mouse).